The primary structure comprises 424 residues: Gamma-glutamyl phosphate reductase (424 aa).

It belongs to the gamma-glutamyl phosphate reductase family.

It localises to the cytoplasm. It catalyses the reaction L-glutamate 5-semialdehyde + phosphate + NADP(+) = L-glutamyl 5-phosphate + NADPH + H(+). It functions in the pathway amino-acid biosynthesis; L-proline biosynthesis; L-glutamate 5-semialdehyde from L-glutamate: step 2/2. Functionally, catalyzes the NADPH-dependent reduction of L-glutamate 5-phosphate into L-glutamate 5-semialdehyde and phosphate. The product spontaneously undergoes cyclization to form 1-pyrroline-5-carboxylate. This is Gamma-glutamyl phosphate reductase from Halorhodospira halophila (strain DSM 244 / SL1) (Ectothiorhodospira halophila (strain DSM 244 / SL1)).